A 557-amino-acid chain; its full sequence is MSDPEMGWVPEPPAMTLGASRVELRVSCHGLLDRDTLTKPHPCVLLKLYSDEQWVEVERTEVLRSCSSPVFSRVLAIEYFFEEKQPLQFHVFDAEDGATSPSSDTFLGSTECTLGQIVSQTKVTKPLLLKNGKTAGKSTITIVAEEVSGTNDYVQLTFRAHKLDNKDLFSKSDPFMEIYKTNGDQSDQLVWRTEVVKNNLNPSWEPFRLSLHSLCSCDIHRPLKFLVYDYDSSGKHDFIGEFTSTFQEMQEGTANPGQEMQWDCINPKYRDKKKNYKSSGTVVLAQCTVEKVHTFLDYIMGGCQISFTVAIDFTASNGDPRSSQSLHCLSPRQPNHYLQALRTVGGICQDYDSDKRFPAFGFGARIPPNFEVSHDFAINFDPENPECEEISGVIASYRRCLPQIQLYGPTNVAPIINRVAEPAQREQSTGQATKYSVLLVLTDGVVSDMAETRTAIVRASRLPMSIIIVGVGNADFSDMRLLDGDDGPLRCPKGVPAARDIVQFVPFRDFKDAAPSALAKCVLAEVPRQVVEYYASQGISPGAPRPSTPAMTPSPSP.

2 consecutive C2 domains span residues 1–127 (MSDP…TKPL) and 134–263 (TAGK…MQWD). Ca(2+) contacts are provided by Asp-167, Asp-173, Asp-229, Asp-231, and Asp-237. The segment at 244 to 303 (STFQEMQEGTANPGQEMQWDCINPKYRDKKKNYKSSGTVVLAQCTVEKVHTFLDYIMGGC) is linker region. In terms of domain architecture, VWFA spans 306 to 526 (SFTVAIDFTA…ALAKCVLAEV (221 aa)).

This sequence belongs to the copine family. Interacts (via second C2 domain) with OS9 (via C-terminus); this interaction occurs in a calcium-dependent manner in vitro. May interact with NECAB1. Ca(2+) is required as a cofactor. Expressed in the brain. Expressed in pyramidal cells, granule cells, and neurons in the dentate gyrus of the hippocampus and in granule cells of the olfactory bulb (at protein level). Expressed in pyramidal cells of the CA1-CA3 regions, in granule cells of the dentate gyrus, in granule cells of the olfactory bulbs, in the mitral cell layer and in neurons of the cerebral cortex layer II, brainstem and spinal cord. Not detected in glial cells.

It localises to the cytoplasm. Its subcellular location is the cell membrane. The protein resides in the endosome. It is found in the cytoplasmic vesicle. The protein localises to the clathrin-coated vesicle. It localises to the perikaryon. Its subcellular location is the cell projection. The protein resides in the dendrite. Its function is as follows. Calcium-dependent phospholipid-binding protein that plays a role in calcium-mediated intracellular processes. Binds phospholipid membranes in a calcium-dependent manner. Plays a role in dendrite formation by melanocytes. In Mus musculus (Mouse), this protein is Copine-6.